Consider the following 654-residue polypeptide: tRNA uridine 5-carboxymethylaminomethyl modification enzyme MnmG (654 aa).

An FAD-binding site is contributed by 17-22 (GGGHAG). Residue 289-303 (GPRYCPSIEDKIVKF) coordinates NAD(+).

It belongs to the MnmG family. In terms of assembly, homodimer. Heterotetramer of two MnmE and two MnmG subunits. FAD is required as a cofactor.

It localises to the cytoplasm. In terms of biological role, NAD-binding protein involved in the addition of a carboxymethylaminomethyl (cmnm) group at the wobble position (U34) of certain tRNAs, forming tRNA-cmnm(5)s(2)U34. This Prochlorococcus marinus (strain MIT 9515) protein is tRNA uridine 5-carboxymethylaminomethyl modification enzyme MnmG.